A 704-amino-acid polypeptide reads, in one-letter code: Zinc finger protein MSN2 (704 aa).

A disordered region spans residues 84 to 246; it reads PSTTDNSLHL…SISNSNSNST (163 aa). Residues 91-112 show a composition bias toward basic and acidic residues; the sequence is LHLKADSNKNRDARTIENDSEI. The span at 113 to 133 shows a compositional bias: polar residues; it reads KSTNNASGSGANQYTTLTSPY. The span at 141–166 shows a compositional bias: low complexity; sequence NMNNPLQSPSPSSVPQNPTINPPINT. Polar residues-rich tracts occupy residues 167–193 and 204–220; these read ASNE…QQHT and NGAN…NNLN. Over residues 228–246 the composition is skewed to low complexity; it reads NSDTNSYSNSISNSNSNST. Positions 261–269 match the 9aaTAD motif; that stretch reads SMLDDYVSS. Ser288 and Ser304 each carry phosphoserine. Residues 418–437 form a disordered region; sequence NRVQHKQLTSSHNNSSTNMK. A compositionally biased stretch (polar residues) spans 426-437; sequence TSSHNNSSTNMK. Phosphoserine occurs at positions 451 and 582. The interval 592 to 634 is disordered; sequence LTNQQNNISSSSVNSTGNGAGVTKERRPSYRRKSMTPSRRSSV. Residues 593-608 show a composition bias toward low complexity; the sequence is TNQQNNISSSSVNSTG. Ser633 bears the Phosphoserine mark. C2H2-type zinc fingers lie at residues 647–665 and 676–698; these read FHCH…LKRH and FACH…IKTH.

In terms of assembly, interacts with WHI2.

Its subcellular location is the cytoplasm. It is found in the nucleus. Its function is as follows. Positive transcriptional factor that acts as a component of the stress responsive system. Recognizes and binds to the stress response element (STRE) which is involved in the response to various forms of stress (heat, oxidative, osmotic, etc.). Involved in the regulation of the CTT1, DDR2, HSP12 genes. May be regulated via WHI2-PSR1 complex phosphatase activity. The sequence is that of Zinc finger protein MSN2 (MSN2) from Saccharomyces cerevisiae (strain ATCC 204508 / S288c) (Baker's yeast).